Here is a 350-residue protein sequence, read N- to C-terminus: tRNA uridine(34) hydroxylase (350 aa).

In terms of domain architecture, Rhodanese spans 146-240 (DDPDALFIDM…YARKAREQGL (95 aa)). Cys-200 acts as the Cysteine persulfide intermediate in catalysis.

The protein belongs to the TrhO family.

The enzyme catalyses uridine(34) in tRNA + AH2 + O2 = 5-hydroxyuridine(34) in tRNA + A + H2O. Functionally, catalyzes oxygen-dependent 5-hydroxyuridine (ho5U) modification at position 34 in tRNAs. The chain is tRNA uridine(34) hydroxylase from Shigella dysenteriae serotype 1 (strain Sd197).